Here is a 200-residue protein sequence, read N- to C-terminus: Outer-membrane lipoprotein carrier protein (200 aa).

The first 18 residues, Met1–Ala18, serve as a signal peptide directing secretion.

The protein belongs to the LolA family. In terms of assembly, monomer.

The protein localises to the periplasm. Its function is as follows. Participates in the translocation of lipoproteins from the inner membrane to the outer membrane. Only forms a complex with a lipoprotein if the residue after the N-terminal Cys is not an aspartate (The Asp acts as a targeting signal to indicate that the lipoprotein should stay in the inner membrane). The polypeptide is Outer-membrane lipoprotein carrier protein (Photobacterium profundum (strain SS9)).